The sequence spans 473 residues: MTRPVVTRFAPSPTGFLHIGGGRTALFNWLYARKHGGTMLLRIEDTDRQRSTQEAIDAILDGLKWLGIDWDGDTVYQFARAARHREVAEQLLAAGKAYRCYATAEELTAMRDKARAEGRAKLYDGSWRDRDPSEAPAGVKPTIRLKAPLTGETVIEDQVQGRVAWQNENLDDLVLLRGDGTPTYMLAVVVDDHDMGVTHVIRGDDHLINAARQKQIYDAMEWELPVMAHIPLIHGPDGSKLSKRHGALGVDAYRAMGYLPAALRNYLVRLGWSHGDQEIFTTQEMIDAFDLPAIGRSAARFDFAKLESLNGHYIRQSDDHSLVTLLEDLLKYIPQGPAIATKFDDSIRAKLTQAMPGLKERAKTLIELLDNAGFIFADRPLALDPKAQAVLTPETRQLIGRLRAALEDVSPWTAATTEAAMRAFAEQAGLKLGAVAQPLRVALTGRTTSPGIFDVLAVLGRDECLSRLADQSA.

The short motif at 11-21 (PSPTGFLHIGG) is the 'HIGH' region element. The 'KMSKS' region signature appears at 240 to 244 (KLSKR). Lys243 is an ATP binding site.

The protein belongs to the class-I aminoacyl-tRNA synthetase family. Glutamate--tRNA ligase type 1 subfamily. Monomer.

It is found in the cytoplasm. The enzyme catalyses tRNA(Glu) + L-glutamate + ATP = L-glutamyl-tRNA(Glu) + AMP + diphosphate. Its function is as follows. Catalyzes the attachment of glutamate to tRNA(Glu) in a two-step reaction: glutamate is first activated by ATP to form Glu-AMP and then transferred to the acceptor end of tRNA(Glu). The protein is Glutamate--tRNA ligase of Rhodopseudomonas palustris (strain ATCC BAA-98 / CGA009).